The primary structure comprises 241 residues: Phosphoribosylaminoimidazole-succinocarboxamide synthase (241 aa).

It belongs to the SAICAR synthetase family.

The catalysed reaction is 5-amino-1-(5-phospho-D-ribosyl)imidazole-4-carboxylate + L-aspartate + ATP = (2S)-2-[5-amino-1-(5-phospho-beta-D-ribosyl)imidazole-4-carboxamido]succinate + ADP + phosphate + 2 H(+). Its pathway is purine metabolism; IMP biosynthesis via de novo pathway; 5-amino-1-(5-phospho-D-ribosyl)imidazole-4-carboxamide from 5-amino-1-(5-phospho-D-ribosyl)imidazole-4-carboxylate: step 1/2. This Deinococcus geothermalis (strain DSM 11300 / CIP 105573 / AG-3a) protein is Phosphoribosylaminoimidazole-succinocarboxamide synthase.